We begin with the raw amino-acid sequence, 396 residues long: Acetate kinase (396 aa).

Residue asparagine 7 participates in Mg(2+) binding. Lysine 14 is a binding site for ATP. Arginine 88 contacts substrate. Catalysis depends on aspartate 145, which acts as the Proton donor/acceptor. ATP-binding positions include 203 to 207 (HAGNG), 278 to 280 (DAR), and 326 to 330 (GIGEN). Glutamate 379 provides a ligand contact to Mg(2+).

The protein belongs to the acetokinase family. As to quaternary structure, homodimer. Mg(2+) is required as a cofactor. The cofactor is Mn(2+).

Its subcellular location is the cytoplasm. It catalyses the reaction acetate + ATP = acetyl phosphate + ADP. The protein operates within metabolic intermediate biosynthesis; acetyl-CoA biosynthesis; acetyl-CoA from acetate: step 1/2. Its function is as follows. Catalyzes the formation of acetyl phosphate from acetate and ATP. Can also catalyze the reverse reaction. In Phytoplasma australiense, this protein is Acetate kinase.